The following is a 156-amino-acid chain: Probable cyclic pyranopterin monophosphate synthase (156 aa).

A substrate-binding site is contributed by 109–110; it reads MD. D124 is an active-site residue.

Belongs to the MoaC family. In terms of assembly, homohexamer; trimer of dimers.

The enzyme catalyses (8S)-3',8-cyclo-7,8-dihydroguanosine 5'-triphosphate = cyclic pyranopterin phosphate + diphosphate. Its pathway is cofactor biosynthesis; molybdopterin biosynthesis. Its function is as follows. Catalyzes the conversion of (8S)-3',8-cyclo-7,8-dihydroguanosine 5'-triphosphate to cyclic pyranopterin monophosphate (cPMP). The polypeptide is Probable cyclic pyranopterin monophosphate synthase (Methanopyrus kandleri (strain AV19 / DSM 6324 / JCM 9639 / NBRC 100938)).